Consider the following 212-residue polypeptide: MAKNYYEITLALAGICQSAHVVQQLAHTGHCNNDVLHTSLNSVLNLNPSSTLAVYGNDEQNLKVGLETLLGILNTSSNKGAGAELSRYAFSLIALERKLKAKPAALDELGKRIGQLERQLEHFDLLSETIVSALAAIYVDVISTLGPRIQVTGSPEVLKNSQVQAKVRSALLAGIRSAVLWQQIGGGRLQLMFSRGQLVKEAKQILARCPSV.

The protein belongs to the HflD family.

The protein resides in the cytoplasm. It localises to the cell inner membrane. The chain is High frequency lysogenization protein HflD homolog from Pectobacterium carotovorum subsp. carotovorum (strain PC1).